Here is a 431-residue protein sequence, read N- to C-terminus: Probable oxidoreductase OrdL (431 aa).

The chain is Probable oxidoreductase OrdL (ordL) from Haemophilus influenzae (strain ATCC 51907 / DSM 11121 / KW20 / Rd).